The primary structure comprises 539 residues: Chaperonin GroEL (539 aa).

ATP-binding positions include 30–33 (TLGP), 87–91 (DGTTT), G414, 479–481 (DAL), and D495.

The protein belongs to the chaperonin (HSP60) family. Forms a cylinder of 14 subunits composed of two heptameric rings stacked back-to-back. Interacts with the co-chaperonin GroES.

It localises to the cytoplasm. It catalyses the reaction ATP + H2O + a folded polypeptide = ADP + phosphate + an unfolded polypeptide.. Functionally, together with its co-chaperonin GroES, plays an essential role in assisting protein folding. The GroEL-GroES system forms a nano-cage that allows encapsulation of the non-native substrate proteins and provides a physical environment optimized to promote and accelerate protein folding. This chain is Chaperonin GroEL, found in Caldicellulosiruptor bescii (strain ATCC BAA-1888 / DSM 6725 / KCTC 15123 / Z-1320) (Anaerocellum thermophilum).